The chain runs to 275 residues: Ribosomal RNA small subunit methyltransferase A (275 aa).

Residues Asn19, Leu21, Gly46, Glu71, Asp94, and Asn117 each contribute to the S-adenosyl-L-methionine site.

This sequence belongs to the class I-like SAM-binding methyltransferase superfamily. rRNA adenine N(6)-methyltransferase family. RsmA subfamily.

It localises to the cytoplasm. It catalyses the reaction adenosine(1518)/adenosine(1519) in 16S rRNA + 4 S-adenosyl-L-methionine = N(6)-dimethyladenosine(1518)/N(6)-dimethyladenosine(1519) in 16S rRNA + 4 S-adenosyl-L-homocysteine + 4 H(+). Functionally, specifically dimethylates two adjacent adenosines (A1518 and A1519) in the loop of a conserved hairpin near the 3'-end of 16S rRNA in the 30S particle. May play a critical role in biogenesis of 30S subunits. The sequence is that of Ribosomal RNA small subunit methyltransferase A from Burkholderia thailandensis (strain ATCC 700388 / DSM 13276 / CCUG 48851 / CIP 106301 / E264).